The sequence spans 151 residues: Ribosomal RNA large subunit methyltransferase H (151 aa).

S-adenosyl-L-methionine contacts are provided by residues Gly-100 and 119–124; that span reads LSRMTF.

This sequence belongs to the RNA methyltransferase RlmH family. Homodimer.

The protein localises to the cytoplasm. The enzyme catalyses pseudouridine(1915) in 23S rRNA + S-adenosyl-L-methionine = N(3)-methylpseudouridine(1915) in 23S rRNA + S-adenosyl-L-homocysteine + H(+). Functionally, specifically methylates the pseudouridine at position 1915 (m3Psi1915) in 23S rRNA. The sequence is that of Ribosomal RNA large subunit methyltransferase H from Thermotoga neapolitana (strain ATCC 49049 / DSM 4359 / NBRC 107923 / NS-E).